The primary structure comprises 462 residues: Histidine--tRNA ligase (462 aa).

Belongs to the class-II aminoacyl-tRNA synthetase family. In terms of assembly, homodimer.

It localises to the cytoplasm. It catalyses the reaction tRNA(His) + L-histidine + ATP = L-histidyl-tRNA(His) + AMP + diphosphate + H(+). This Trichormus variabilis (strain ATCC 29413 / PCC 7937) (Anabaena variabilis) protein is Histidine--tRNA ligase.